A 466-amino-acid chain; its full sequence is Myocardial zonula adherens protein (466 aa).

Positions 1-10 (MLRSTSTVTL) are enriched in polar residues. A signal peptide spans 1 to 16 (MLRSTSTVTLFSGGGA). Positions 1-68 (MLRSTSTVTL…SNGESTKRLP (68 aa)) are disordered. Basic and acidic residues predominate over residues 45-55 (TEKKIERKDQP). Coiled coils occupy residues 95-137 (NQLK…QDLS) and 187-415 (HIKD…LTET).

The protein belongs to the MYZAP family. In terms of assembly, interacts with DSP, MPRIP and TJP1/ZO1. Interaction with MPRIP inhibits the activation of transcription factor SRF. Interacts with GRIN1. Interacts with DYNLL1. In terms of tissue distribution, detected in heart myocardium and lung.

It is found in the cytoplasm. It localises to the cytoskeleton. The protein localises to the cell membrane. Its subcellular location is the myofibril. The protein resides in the sarcomere. It is found in the i band. It localises to the z line. The protein localises to the cell junction. Plays a role in cellular signaling via Rho-related GTP-binding proteins and activation of transcription factor SRF. Targets TJP1 to cell junctions. In cortical neurons, may play a role in glutaminergic signal transduction through interaction with the NMDA receptor subunit GRIN1. The protein is Myocardial zonula adherens protein (Myzap) of Mus musculus (Mouse).